Here is a 359-residue protein sequence, read N- to C-terminus: Outer membrane protein P5 (359 aa).

The first 21 residues, 1–21, serve as a signal peptide directing secretion; that stretch reads MKKTAIALVVAGLAAASVAQA. Transmembrane regions (beta stranded) follow at residues 27–37, 64–75, 83–91, 110–121, 126–134, 164–173, 178–185, and 211–219; these read TFYAGVKAGQG, TFTYGVFGGYQI, LAAELGYDD, HGAYLSLKGSYE, LDVYGKAGV, GLFAVGAEYA, LAVRLEYQ, and CINAGISYR. The region spanning 233 to 359 is the OmpA-like domain; that stretch reads MVSKTFSLNS…RVEIAVNGTK (127 aa). Cys332 and Cys344 form a disulfide bridge.

The protein belongs to the outer membrane OOP (TC 1.B.6) superfamily. OmpA family. In terms of assembly, monomer and homodimer.

Its subcellular location is the cell outer membrane. The protein resides in the fimbrium. Its function is as follows. Acts as a fimbriae subunit, allowing adhesion to host cells. With TolR probably plays a role in maintaining the position of the peptidoglycan cell wall in the periplasm. Acts as a porin with low permeability that allows slow penetration of small solutes; an internal gate slows down solute passage. The protein is Outer membrane protein P5 of Haemophilus influenzae.